We begin with the raw amino-acid sequence, 98 residues long: NADH-ubiquinone oxidoreductase chain 4L (98 aa).

2 helical membrane passes run 26-46 (LVAS…MATL) and 61-81 (IILL…LISI).

It belongs to the complex I subunit 4L family. As to quaternary structure, core subunit of respiratory chain NADH dehydrogenase (Complex I) which is composed of 45 different subunits.

It is found in the mitochondrion inner membrane. It catalyses the reaction a ubiquinone + NADH + 5 H(+)(in) = a ubiquinol + NAD(+) + 4 H(+)(out). Its function is as follows. Core subunit of the mitochondrial membrane respiratory chain NADH dehydrogenase (Complex I) which catalyzes electron transfer from NADH through the respiratory chain, using ubiquinone as an electron acceptor. Part of the enzyme membrane arm which is embedded in the lipid bilayer and involved in proton translocation. The polypeptide is NADH-ubiquinone oxidoreductase chain 4L (MT-ND4L) (Macaca nigrescens (Gorontalo macaque)).